We begin with the raw amino-acid sequence, 332 residues long: Ribosomal RNA small subunit methyltransferase C (332 aa).

This sequence belongs to the methyltransferase superfamily. RsmC family. Monomer.

The protein resides in the cytoplasm. The enzyme catalyses guanosine(1207) in 16S rRNA + S-adenosyl-L-methionine = N(2)-methylguanosine(1207) in 16S rRNA + S-adenosyl-L-homocysteine + H(+). Specifically methylates the guanine in position 1207 of 16S rRNA in the 30S particle. The protein is Ribosomal RNA small subunit methyltransferase C of Pseudomonas aeruginosa (strain UCBPP-PA14).